Here is a 528-residue protein sequence, read N- to C-terminus: Glutamyl-tRNA(Gln) amidotransferase subunit B, mitochondrial (528 aa).

The transit peptide at 1-21 (MSWRLSFRTNLLIYNVRRRNY) directs the protein to the mitochondrion.

This sequence belongs to the GatB/GatE family. GatB subfamily. In terms of assembly, subunit of the heterotrimeric GatCAB amidotransferase (AdT) complex, composed of A, B and C subunits.

It is found in the mitochondrion. It catalyses the reaction L-glutamyl-tRNA(Gln) + L-glutamine + ATP + H2O = L-glutaminyl-tRNA(Gln) + L-glutamate + ADP + phosphate + H(+). Allows the formation of correctly charged Gln-tRNA(Gln) through the transamidation of misacylated Glu-tRNA(Gln) in the mitochondria. The reaction takes place in the presence of glutamine and ATP through an activated gamma-phospho-Glu-tRNA(Gln). In Aedes aegypti (Yellowfever mosquito), this protein is Glutamyl-tRNA(Gln) amidotransferase subunit B, mitochondrial.